The chain runs to 223 residues: PRA1 family protein B5 (223 aa).

Transmembrane regions (helical) follow at residues 83–103 (SSYFRVNYVCIVALILGFSLL), 105–125 (HPFSLILLLCLAASWLFLYLF), 146–166 (GGLILSTIAVIFFTSVGSVLI), 170–190 (MIGIATICVHGAFRAPDDLFL), and 196–216 (AASGFLSFIGVPAIPSVAPSA).

This sequence belongs to the PRA1 family. In terms of assembly, interacts with PRA1B1, PRA1B2, PRA1B3, PRA1B4, PRA1B6 and PRA1E. Expressed in roots, lateral roots, lateral root caps, columella cells, leaves, and shoot apex.

The protein resides in the endosome membrane. Functionally, may be involved in both secretory and endocytic intracellular trafficking in the endosomal/prevacuolar compartments. The sequence is that of PRA1 family protein B5 (PRA1B5) from Arabidopsis thaliana (Mouse-ear cress).